The following is a 449-amino-acid chain: Adenylosuccinate synthetase isozyme 1 B (449 aa).

GTP-binding positions include 34 to 40 and 62 to 64; these read GDEGKGK and GHT. Asp-35 acts as the Proton acceptor in catalysis. Mg(2+) is bound by residues Asp-35 and Gly-62. Residue Asp-35 participates in substrate binding. Residues 35–38, 60–63, Thr-155, Arg-169, Asn-248, Thr-263, and Arg-327 contribute to the IMP site; these read DEGK and NAGH. His-63 acts as the Proton donor in catalysis. 323–329 contacts substrate; it reads VTTGRKR. Residues Arg-329, 355–357, and 437–440 each bind GTP; these read KLD and GVGK.

Belongs to the adenylosuccinate synthetase family. Homodimer. The cofactor is Mg(2+).

The protein localises to the cytoplasm. The enzyme catalyses IMP + L-aspartate + GTP = N(6)-(1,2-dicarboxyethyl)-AMP + GDP + phosphate + 2 H(+). The protein operates within purine metabolism; AMP biosynthesis via de novo pathway; AMP from IMP: step 1/2. Functionally, component of the purine nucleotide cycle (PNC), which interconverts IMP and AMP to regulate the nucleotide levels in various tissues, and which contributes to glycolysis and ammoniagenesis. Catalyzes the first committed step in the biosynthesis of AMP from IMP. The sequence is that of Adenylosuccinate synthetase isozyme 1 B (adss1b) from Salmo salar (Atlantic salmon).